The sequence spans 1063 residues: Structural polyprotein (1063 aa).

Positions 23–131 are disordered; that stretch reads LRAELAAGAS…LGPPTNPFQA (109 aa). Positions 30–69 are human C1QBP/SF2P32-binding; it reads GASQLRRPRPPRQRDSSTSGDDSGRDSGGPRRRRGNRGRG. Ser46 is modified (phosphoserine; by host). The segment covering 59 to 69 has biased composition (basic residues); sequence PRRRRGNRGRG. Positions 70-87 are enriched in basic and acidic residues; sequence QRKDWSKAPPPPEERQES. Positions 93–107 are enriched in pro residues; the sequence is VPKPPRAPPQPPQPP. Cysteines 153 and 197 form a disulfide. The interval 279-300 is functions as E2 signal peptide; the sequence is GAPQVFLAGLLLAAVAVGTARA. Residues 301-534 are Extracellular-facing; the sequence is GLQPRTDIAA…LWLATANALS (234 aa). The disordered stretch occupies residues 305–327; that stretch reads RTDIAAPPAPPQAPRAHGKHYGH. N-linked (GlcNAc...) asparagine; by host glycans are attached at residues Asn353, Asn371, Asn410, and Asn429. Residues 535-555 form a helical membrane-spanning segment; the sequence is LDHALAAVVLLVPWVLIFMLC. Over 556 to 582 the chain is Cytoplasmic; sequence RRACRRRGAAAALTAVVLQGYNPPAYG. Residues 562–582 form a functions as E1 signal peptide region; it reads RGAAAALTAVVLQGYNPPAYG. Residues 583 to 1028 lie on the Extracellular side of the membrane; the sequence is EEAFTYLCTA…QTWAEWAAAH (446 aa). 8 cysteine pairs are disulfide-bonded: Cys590/Cys595, Cys619/Cys824, Cys641/Cys653, Cys699/Cys712, Cys758/Cys767, Cys807/Cys817, Cys931/Cys934, and Cys950/Cys983. N-linked (GlcNAc...) asparagine; by host glycosylation is present at Asn658. Ca(2+)-binding residues include Asn670 and Ala671. Positions 718 and 719 each coordinate Ca(2+). N-linked (GlcNAc...) asparagine; by host glycans are attached at residues Asn759 and Asn791. Residues Thr1011 and Thr1012 are each glycosylated (O-linked (GalNAc...) threonine; by host). The helical transmembrane segment at 1029–1049 threads the bilayer; it reads WWQLTLGAICALLLAGLLACC. At 1050–1063 the chain is on the extracellular side; the sequence is AKCLYHLRGAIAPR.

Homodimer; further assembles into homooligomer. Interacts with human C1QBP. Interacts (via N-terminus) with protease/methyltransferase p150. As to quaternary structure, heterodimer with spike glycoprotein E2. In terms of assembly, heterodimer with spike glycoprotein E1. Structural polyprotein: Specific enzymatic cleavages in vivo yield mature proteins. Two signal peptidase-mediated cleavages within the polyprotein produce the structural proteins capsid, E2, and E1. The E2 signal peptide remains attached to the C-terminus of the capsid protein after cleavage by the signal peptidase. Another signal peptide at E2 C-terminus directs E1 to the ER, with a similar mechanism. Post-translationally, contains three N-linked oligosaccharides. In terms of processing, capsid is phosphorylated on Ser-46 by host. This phosphorylation negatively regulates capsid protein RNA-binding activity. Dephosphorylated by human PP1A.

The protein resides in the virion. It is found in the host cytoplasm. The protein localises to the host mitochondrion. It localises to the virion membrane. Its subcellular location is the host Golgi apparatus membrane. Capsid protein interacts with genomic RNA and assembles into icosahedric core particles 65-70 nm in diameter. The resulting nucleocapsid eventually associates with the cytoplasmic domain of E2 at the cell membrane, leading to budding and formation of mature virions from host Golgi membranes. Phosphorylation negatively regulates RNA-binding activity, possibly delaying virion assembly during the viral replication phase. Capsid protein dimerizes and becomes disulfide-linked in the virion. Modulates genomic RNA replication. Modulates subgenomic RNA synthesis by interacting with human C1QBP/SF2P32. Induces both perinuclear clustering of mitochondria and the formation of electron-dense intermitochondrial plaques, both hallmarks of rubella virus infected cells. Induces apoptosis when expressed in transfected cells. In terms of biological role, responsible for viral attachment to target host cell, by binding to the cell receptor. Its transport to the plasma membrane depends on interaction with E1 protein. The surface glycoproteins display an irregular helical organization and a pseudo-tetrameric inner nucleocapsid arrangement. Its function is as follows. Class II viral fusion protein. Fusion activity is inactive as long as E1 is bound to E2 in mature virion. After virus attachment to target cell and clathrin-mediated endocytosis, acidification of the endosome would induce dissociation of E1/E2 heterodimer and concomitant trimerization of the E1 subunits. This E1 homotrimer is fusion active, and promotes release of viral nucleocapsid in cytoplasm after endosome and viral membrane fusion. The cytoplasmic tail of spike glycoprotein E1 modulates virus release. The surface glycoproteins display an irregular helical organization and a pseudo-tetrameric inner nucleocapsid arrangement. The polypeptide is Structural polyprotein (Homo sapiens (Human)).